A 381-amino-acid polypeptide reads, in one-letter code: 3-dehydroquinate synthase (381 aa).

NAD(+) is bound by residues 81–86 (EGEVSK), 115–119 (GVVGD), 139–140 (TS), K152, and K161. Zn(2+) is bound by residues E194, H256, and H274.

Belongs to the sugar phosphate cyclases superfamily. Dehydroquinate synthase family. The cofactor is Co(2+). Requires Zn(2+) as cofactor. NAD(+) serves as cofactor.

Its subcellular location is the cytoplasm. It catalyses the reaction 7-phospho-2-dehydro-3-deoxy-D-arabino-heptonate = 3-dehydroquinate + phosphate. The protein operates within metabolic intermediate biosynthesis; chorismate biosynthesis; chorismate from D-erythrose 4-phosphate and phosphoenolpyruvate: step 2/7. Its function is as follows. Catalyzes the conversion of 3-deoxy-D-arabino-heptulosonate 7-phosphate (DAHP) to dehydroquinate (DHQ). In Rhodopseudomonas palustris (strain BisA53), this protein is 3-dehydroquinate synthase.